Reading from the N-terminus, the 128-residue chain is Ribonuclease P protein component 4 (128 aa).

Zn(2+) is bound by residues Cys67, Cys70, Cys96, and Cys99.

This sequence belongs to the eukaryotic/archaeal RNase P protein component 4 family. As to quaternary structure, consists of a catalytic RNA component and at least 4-5 protein subunits. It depends on Zn(2+) as a cofactor.

The protein resides in the cytoplasm. The enzyme catalyses Endonucleolytic cleavage of RNA, removing 5'-extranucleotides from tRNA precursor.. Its function is as follows. Part of ribonuclease P, a protein complex that generates mature tRNA molecules by cleaving their 5'-ends. The chain is Ribonuclease P protein component 4 from Methanopyrus kandleri (strain AV19 / DSM 6324 / JCM 9639 / NBRC 100938).